Consider the following 286-residue polypeptide: Aquaporin PIP1-3 (286 aa).

M1 is subject to N-acetylmethionine. Residues 1 to 33 (MEGKEEDVRVGANKFPERQPIGTSAQTDKDYKE) form a disordered region. The Cytoplasmic portion of the chain corresponds to 1–54 (MEGKEEDVRVGANKFPERQPIGTSAQTDKDYKEPPPAPFFEPGELSSWSFYRAG). The helical transmembrane segment at 55-75 (IAEFIATFLFLYITVLTVMGV) threads the bilayer. The Extracellular segment spans residues 76–81 (KRAPNM). Residues 82–102 (CASVGIQGIAWAFGGMIFALV) form a helical membrane-spanning segment. Residues 103 to 132 (YCTAGISGGHINPAVTFGLFLARKLSLTRA) lie on the Cytoplasmic side of the membrane. An NPA 1 motif is present at residues 114–116 (NPA). The helical transmembrane segment at 133–153 (VFYIVMQCLGAICGAGVVKGF) threads the bilayer. Topologically, residues 154–174 (QPNPYQTLGGGANTVAHGYTK) are extracellular. A helical membrane pass occupies residues 175–195 (GSGLGAEIIGTFVLVYTVFSA). Topologically, residues 196–208 (TDAKRSARDSHVP) are cytoplasmic. The helical transmembrane segment at 209–229 (ILAPLPIGFAVFLVHLATIPI) threads the bilayer. Topologically, residues 230-256 (TGTGINPARSLGAAIIYNKDHAWDDHW) are extracellular. An NPA 2 motif is present at residues 235 to 237 (NPA). The helical transmembrane segment at 257–277 (IFWVGPFIGAALAALYHQLVI) threads the bilayer. At 278–286 (RAIPFKSRS) the chain is on the cytoplasmic side. S284 bears the Phosphoserine mark.

The protein belongs to the MIP/aquaporin (TC 1.A.8) family. PIP (TC 1.A.8.11) subfamily. In terms of tissue distribution, expressed in roots, above ground, ripening fruit, flower buds, green siliques and senescing leaves.

It is found in the cell membrane. In terms of biological role, water channel required to facilitate the transport of water across cell membrane. Its function is impaired by Hg(2+). This chain is Aquaporin PIP1-3 (PIP1-3), found in Arabidopsis thaliana (Mouse-ear cress).